Consider the following 462-residue polypeptide: uncharacterized protein (462 aa).

A run of 2 helical transmembrane segments spans residues 12 to 32 (WWWL…APTV) and 257 to 277 (GLCV…LELV).

Belongs to the HHV-5 US29 protein family.

The protein resides in the host membrane. This is an uncharacterized protein from Homo sapiens (Human).